Consider the following 418-residue polypeptide: EQQRYLNAKKYVKLVLVADYIMYLKYGRSLTTLRTRMYDIVNIINLIFQRMNIHVALVGLEIWSNRDKIIVQSSADVTLDLFAKWRETDLLKRKSHDNAQLLTGINFNGPTAGLAYLSGICKPMYSAGIVQDHNKVHHLVAIAMAHEMGHNLGMDHDKDTCTCGARSCVMAGTLSCEPSYLFSDCSRRGHRAFLIKDMPQCILEKPLRTDVVSPPVCGNYFVEVGEECDCGSPATCRDTCCDAATCKLRQGAQCAEGLCCDQCRFKGAGTECRAAKDECDMADLCTGRSAECTDRFQRNGQPCQNNNGYCYNGTCPIMRDQCIALFGPNAAVSQDACFQFNLQGNHYGYCRKEQNTKIACEPQDVKCGRLYCFPSSPATKNPCNIHYSPNDEDKGMVLPGTKCADGKACSNGRCVDVT.

Residues 10 to 206 (KYVKLVLVAD…DMPQCILEKP (197 aa)) enclose the Peptidase M12B domain. 3 cysteine pairs are disulfide-bonded: C121/C201, C161/C185, and C163/C168. Zn(2+) is bound at residue H146. E147 is a catalytic residue. Positions 150 and 156 each coordinate Zn(2+). Residues 214-299 (PPVCGNYFVE…AECTDRFQRN (86 aa)) enclose the Disintegrin domain. 6 residues coordinate Ca(2+): V216, N219, F221, E223, E226, and D229. Disulfide bonds link C217-C246, C228-C241, C230-C236, C240-C263, C254-C260, C259-C285, C272-C292, C279-C310, C303-C315, C322-C372, C337-C383, C350-C360, C367-C409, and C403-C414. Positions 278-280 (ECD) match the D/ECD-tripeptide motif. Residues D280, M281, D283, D294, and R295 each coordinate Ca(2+). N312 carries an N-linked (GlcNAc...) asparagine glycan.

The protein belongs to the venom metalloproteinase (M12B) family. P-III subfamily. P-IIIc sub-subfamily. As to quaternary structure, homodimer; disulfide-linked. Zn(2+) is required as a cofactor. In terms of tissue distribution, expressed by the venom gland.

The protein resides in the secreted. Snake venom zinc metalloprotease that induces apoptosis in vascular endothelial cells (VEC), without degrading the extracellular matrix (it cannot cleave collagen) or inhibiting adhesion of VEC. Has also fibrinogenolytic and hemorrhagic activities. This chain is Zinc metalloproteinase-disintegrin-like batroxstatin-2, found in Bothrops atrox (Barba amarilla).